The following is a 255-amino-acid chain: S-adenosyl-L-methionine-dependent uroporphyrinogen III methyltransferase (255 aa).

Residues proline 15, 91-93, 121-122, methionine 175, and alanine 232 contribute to the S-adenosyl-L-homocysteine site; these read GGD and TS.

Belongs to the precorrin methyltransferase family. In terms of assembly, homodimer.

It catalyses the reaction uroporphyrinogen III + 2 S-adenosyl-L-methionine = precorrin-2 + 2 S-adenosyl-L-homocysteine + H(+). Its pathway is porphyrin-containing compound metabolism; siroheme biosynthesis; precorrin-2 from uroporphyrinogen III: step 1/1. Its function is as follows. Involved in the archaeal biosynthesis of heme. Catalyzes the methylation of carbons 2 and 7 of uroporphyrinogen-III (UROGEN) to yield precorrin-2. It does not catalyze the overmethylation of precorrin-2 to trimethylpyrrocorphin. The polypeptide is S-adenosyl-L-methionine-dependent uroporphyrinogen III methyltransferase (Methanosarcina barkeri (strain Fusaro / DSM 804)).